Consider the following 393-residue polypeptide: Digeranylgeranylglycerophospholipid reductase (393 aa).

Ala13, Asp32, Cys43, Ala44, Gly46, Arg95, Val119, Asp274, and Gly286 together coordinate FAD. A 2,3-bis-O-(geranylgeranyl)-sn-glycerol 1-phospholipid is bound by residues Arg327 and Gly363.

The protein belongs to the geranylgeranyl reductase family. DGGGPL reductase subfamily. The cofactor is FAD.

It carries out the reaction a 2,3-bis-O-phytanyl-sn-glycerol 1-phospholipid + 8 A = a 2,3-bis-O-(geranylgeranyl)-sn-glycerol 1-phospholipid + 8 AH2. The catalysed reaction is 2,3-bis-O-(phytanyl)-sn-glycerol 1-phosphate + 8 A = 2,3-bis-O-(geranylgeranyl)-sn-glycerol 1-phosphate + 8 AH2. The enzyme catalyses CDP-2,3-bis-O-(geranylgeranyl)-sn-glycerol + 8 AH2 = CDP-2,3-bis-O-(phytanyl)-sn-glycerol + 8 A. It catalyses the reaction archaetidylserine + 8 AH2 = 2,3-bis-O-phytanyl-sn-glycero-3-phospho-L-serine + 8 A. It participates in membrane lipid metabolism; glycerophospholipid metabolism. Is involved in the reduction of 2,3-digeranylgeranylglycerophospholipids (unsaturated archaeols) into 2,3-diphytanylglycerophospholipids (saturated archaeols) in the biosynthesis of archaeal membrane lipids. Catalyzes the formation of archaetidic acid (2,3-di-O-phytanyl-sn-glyceryl phosphate) from 2,3-di-O-geranylgeranylglyceryl phosphate (DGGGP) via the hydrogenation of each double bond of the isoprenoid chains. Is also probably able to reduce double bonds of geranyl groups in CDP-2,3-bis-O-(geranylgeranyl)-sn-glycerol and archaetidylserine, thus acting at various stages in the biosynthesis of archaeal membrane lipids. This is Digeranylgeranylglycerophospholipid reductase from Pyrococcus horikoshii (strain ATCC 700860 / DSM 12428 / JCM 9974 / NBRC 100139 / OT-3).